Reading from the N-terminus, the 258-residue chain is Envelope glycoprotein L (258 aa).

The first 31 residues, 1 to 31, serve as a signal peptide directing secretion; that stretch reads MYECMFFSHRLTIGFYIPLIVLTTMSSLSES. Residues 36–243 enclose the gL betaherpesvirus-type domain; sequence QKTACTVAAI…ILYQASLSGP (208 aa). Cys145 and Cys150 are joined by a disulfide.

Belongs to the herpesviridae glycoprotein L (gL) family. Betaherpesvirinae gL subfamily. In terms of assembly, interacts with glycoprotein H (gH); this interaction is necessary for the correct processing and cell surface expression of gH. Forms the envelope pentamer complex (PC) composed of gH, gL, UL128, UL130, and UL131A. The pentamer interacts with host NRP2. Forms the envelope trimer complex composed of gH, gL, and gO. The trimer interacts with host PDGFRA.

The protein resides in the virion membrane. It localises to the host cell membrane. It is found in the host Golgi apparatus. The protein localises to the host trans-Golgi network. Functionally, the heterodimer glycoprotein H-glycoprotein L is required for the fusion of viral and plasma membranes leading to virus entry into the host cell. Acts as a functional inhibitor of gH and maintains gH in an inhibited form. Upon binding to host integrins, gL dissociates from gH leading to activation of the viral fusion glycoproteins gB and gH. In human cytomegalovirus, forms two distincts complexes to mediate viral entry, a trimer and a pentamer at the surface of the virion envelope. The gH-gL-gO trimer is required for infection in fibroblasts by interacting with host PDGFRA. The gH-gL-UL128-UL130-UL131A pentamer is essential for viral entry in epithelial, endothelial and myeloid cells via interaction with host NRP2. The polypeptide is Envelope glycoprotein L (Guinea pig cytomegalovirus (strain 22122) (GPCMV)).